Here is a 350-residue protein sequence, read N- to C-terminus: tRNA pseudouridine synthase D (350 aa).

Phenylalanine 27 lines the substrate pocket. Aspartate 80 acts as the Nucleophile in catalysis. Substrate is bound at residue asparagine 129. A TRUD domain is found at glycine 155–leucine 303. Residue phenylalanine 329 participates in substrate binding.

The protein belongs to the pseudouridine synthase TruD family.

The catalysed reaction is uridine(13) in tRNA = pseudouridine(13) in tRNA. Responsible for synthesis of pseudouridine from uracil-13 in transfer RNAs. The chain is tRNA pseudouridine synthase D from Proteus mirabilis (strain HI4320).